The sequence spans 312 residues: Olfactory receptor 2H2 (312 aa).

Residues 1 to 23 (MVNQSSTPGFLLLGFSEHPGLER) lie on the Extracellular side of the membrane. Asn-3 is a glycosylation site (N-linked (GlcNAc...) asparagine). The chain crosses the membrane as a helical span at residues 24–47 (TLFVVVLTSYLLTLVGNTLIILLS). Over 48-55 (ALDPKLHS) the chain is Cytoplasmic. Residues 56 to 77 (PMYFFLSNLSFLDLCFTTSCVP) traverse the membrane as a helical segment. Residues 78–98 (QMLVNLWGPKKTISFLDCSVQ) lie on the Extracellular side of the membrane. The cysteines at positions 95 and 187 are disulfide-linked. The chain crosses the membrane as a helical span at residues 99-118 (IFIFLSLGTTECILLTVMAF). At 119 to 137 (DRYVAVCQPLHYATIIHPR) the chain is on the cytoplasmic side. The helical transmembrane segment at 138–156 (LCWQLASVAWVIGLVESVV) threads the bilayer. Residues 157-193 (QTPSTLHLPFCPDRQVDDFVCEVPALIRLSCEDTSYN) lie on the Extracellular side of the membrane. Residues 194–217 (EIQVAVASVFILVVPLSLILVSYG) traverse the membrane as a helical segment. The Cytoplasmic portion of the chain corresponds to 218–234 (AITWAVLRINSAKGRRK). The chain crosses the membrane as a helical span at residues 235–257 (AFGTCSSHLTVVTLFYSSVIAVY). The Extracellular portion of the chain corresponds to 258–270 (LQPKNPYAQERGK). A helical transmembrane segment spans residues 271–290 (FFGLFYAVGTPSLNPLIYTL). The Cytoplasmic segment spans residues 291–312 (RNKEVTRAFRRLLGKEMGLTQS).

This sequence belongs to the G-protein coupled receptor 1 family.

It localises to the cell membrane. Odorant receptor. This chain is Olfactory receptor 2H2 (OR2H2), found in Homo sapiens (Human).